The chain runs to 65 residues: DNA gyrase inhibitor YacG (65 aa).

Cysteine 8, cysteine 11, cysteine 27, and cysteine 31 together coordinate Zn(2+). Residues 43–65 (SYRIPDTGKDSEKQENDPSGSEK) form a disordered region. The span at 48–65 (DTGKDSEKQENDPSGSEK) shows a compositional bias: basic and acidic residues.

The protein belongs to the DNA gyrase inhibitor YacG family. Interacts with GyrB. It depends on Zn(2+) as a cofactor.

Its function is as follows. Inhibits all the catalytic activities of DNA gyrase by preventing its interaction with DNA. Acts by binding directly to the C-terminal domain of GyrB, which probably disrupts DNA binding by the gyrase. This Nitrosospira multiformis (strain ATCC 25196 / NCIMB 11849 / C 71) protein is DNA gyrase inhibitor YacG.